A 296-amino-acid polypeptide reads, in one-letter code: Iron(3+)-hydroxamate-binding protein FhuD (296 aa).

Positions 1–30 (MSGLPLISRRRLLTAMALSPLLWQMNTAHA) form a signal peptide, tat-type signal. In terms of domain architecture, Fe/B12 periplasmic-binding spans 37–296 (RIVALEWLPV…VLDNAIGGKA (260 aa)). The Fe(III)-coprogen site is built by Trp-68, Arg-84, Ser-103, Tyr-106, Phe-124, Trp-217, Trp-273, Phe-274, and Tyr-275.

It belongs to the bacterial solute-binding protein 8 family. As to quaternary structure, the complex is composed of two ATP-binding proteins (FhuC), a transmembrane protein (FhuB) and a solute-binding protein (FhuD). FhuD interacts with FhuB. Substrate-loaded FhuD binds FhuB more strongly than FhuD alone. In terms of processing, exported by the Tat system. The position of the signal peptide cleavage has been experimentally proven. Can also be exported by the Sec system.

The protein resides in the periplasm. Its function is as follows. Part of the ABC transporter complex FhuCDB involved in iron(3+)-hydroxamate import. Binds the iron(3+)-hydroxamate complex and transfers it to the membrane-bound permease. Required for the transport of all iron(3+)-hydroxamate siderophores such as ferrichrome, gallichrome, desferrioxamine, coprogen, aerobactin, shizokinen, rhodotorulic acid and the antibiotic albomycin. The chain is Iron(3+)-hydroxamate-binding protein FhuD (fhuD) from Escherichia coli (strain K12).